The sequence spans 1257 residues: Elongation factor 2 (1257 aa).

The region spanning 273–402 (LAGLMFGDGC…LQLLLQKFDV (130 aa)) is the DOD-type homing endonuclease domain. In terms of domain architecture, tr-type G spans 541 to 782 (VEEHHNFAAE…MVVKHLPDPV (242 aa)). Residues 616–620 (DTPGH) and 670–673 (NKVD) each bind GTP. The residue at position 1120 (His1120) is a Diphthamide. The segment covering 1237 to 1250 (ERKGLKPEPPKPED) has biased composition (basic and acidic residues). Residues 1237–1257 (ERKGLKPEPPKPEDYIEDYGG) are disordered.

Belongs to the TRAFAC class translation factor GTPase superfamily. Classic translation factor GTPase family. EF-G/EF-2 subfamily. This protein undergoes a protein self splicing that involves a post-translational excision of the intervening region (intein) followed by peptide ligation.

It is found in the cytoplasm. Catalyzes the GTP-dependent ribosomal translocation step during translation elongation. During this step, the ribosome changes from the pre-translocational (PRE) to the post-translocational (POST) state as the newly formed A-site-bound peptidyl-tRNA and P-site-bound deacylated tRNA move to the P and E sites, respectively. Catalyzes the coordinated movement of the two tRNA molecules, the mRNA and conformational changes in the ribosome. In Methanopyrus kandleri (strain AV19 / DSM 6324 / JCM 9639 / NBRC 100938), this protein is Elongation factor 2.